We begin with the raw amino-acid sequence, 443 residues long: Probable D-serine dehydratase (443 aa).

Lys-118 carries the N6-(pyridoxal phosphate)lysine modification.

It belongs to the serine/threonine dehydratase family. DsdA subfamily. It depends on pyridoxal 5'-phosphate as a cofactor.

It carries out the reaction D-serine = pyruvate + NH4(+). This Vibrio campbellii (strain ATCC BAA-1116) protein is Probable D-serine dehydratase.